The sequence spans 339 residues: D-erythrose-4-phosphate dehydrogenase (339 aa).

NAD(+) contacts are provided by residues 12–13 (RI) and R81. Substrate is bound by residues 154-156 (SCT), R200, 213-214 (TK), and R236. The active-site Nucleophile is C155. N318 lines the NAD(+) pocket.

It belongs to the glyceraldehyde-3-phosphate dehydrogenase family. Epd subfamily. Homotetramer.

Its subcellular location is the cytoplasm. The enzyme catalyses D-erythrose 4-phosphate + NAD(+) + H2O = 4-phospho-D-erythronate + NADH + 2 H(+). The protein operates within cofactor biosynthesis; pyridoxine 5'-phosphate biosynthesis; pyridoxine 5'-phosphate from D-erythrose 4-phosphate: step 1/5. Functionally, catalyzes the NAD-dependent conversion of D-erythrose 4-phosphate to 4-phosphoerythronate. The sequence is that of D-erythrose-4-phosphate dehydrogenase from Escherichia coli (strain UTI89 / UPEC).